We begin with the raw amino-acid sequence, 221 residues long: Germin-like protein subfamily 1 member 15 (221 aa).

The N-terminal stretch at 1 to 21 (MKVSMSLILITFWALVTIAKA) is a signal peptide. Cysteine 31 and cysteine 48 are disulfide-bonded. Residues 62 to 213 (SGLNQAGITN…AFQLDVNVVK (152 aa)) form the Cupin type-1 domain. A glycan (N-linked (GlcNAc...) asparagine) is linked at asparagine 77. Positions 110, 112, 117, and 159 each coordinate Mn(2+).

Belongs to the germin family. Oligomer (believed to be a pentamer but probably hexamer).

Its subcellular location is the secreted. It localises to the extracellular space. The protein localises to the apoplast. May play a role in plant defense. Probably has no oxalate oxidase activity even if the active site is conserved. The protein is Germin-like protein subfamily 1 member 15 of Arabidopsis thaliana (Mouse-ear cress).